The sequence spans 144 residues: IgW chain C region, secreted form 1/3 (144 aa).

An Ig-like domain is found at 1-82 (VYNQTTAVLG…AGSRFNDRIS (82 aa)). Residues asparagine 3, asparagine 43, and asparagine 123 are each glycosylated (N-linked (GlcNAc...) asparagine). Cysteine 11 and cysteine 68 are disulfide-bonded. A secretory tail region spans residues 87–144 (KGGTINLPVPGGNTPCTCPPCSCSGCMPKLVYQTDLNVTLENGGQLQYNCHQQACKIK).

In terms of tissue distribution, expressed mainly in lymphoid tissues including spleen, epigonal organ and circulating lymphocytes.

Its subcellular location is the secreted. The protein is IgW chain C region, secreted form 1/3 of Heterodontus francisci (Horn shark).